Here is a 109-residue protein sequence, read N- to C-terminus: Large ribosomal subunit protein uL1 (109 aa).

The protein belongs to the universal ribosomal protein uL1 family. In terms of assembly, part of the 50S ribosomal subunit.

Binds directly to 23S rRNA. The L1 stalk is quite mobile in the ribosome, and is involved in E site tRNA release. In terms of biological role, protein L1 is also a translational repressor protein, it controls the translation of the L11 operon by binding to its mRNA. This Aquifex pyrophilus protein is Large ribosomal subunit protein uL1 (rplA).